The following is a 387-amino-acid chain: Phosphoglycerate kinase (387 aa).

Substrate is bound by residues 21-23 (DLN), Arg-36, 59-62 (HLGR), Arg-113, and Arg-146. ATP-binding positions include Lys-197, Glu-314, and 340–343 (GGDT).

Belongs to the phosphoglycerate kinase family. In terms of assembly, monomer.

It localises to the cytoplasm. It catalyses the reaction (2R)-3-phosphoglycerate + ATP = (2R)-3-phospho-glyceroyl phosphate + ADP. Its pathway is carbohydrate degradation; glycolysis; pyruvate from D-glyceraldehyde 3-phosphate: step 2/5. The sequence is that of Phosphoglycerate kinase from Pseudomonas putida (strain ATCC 700007 / DSM 6899 / JCM 31910 / BCRC 17059 / LMG 24140 / F1).